The chain runs to 477 residues: Cysteine protease ATG4b (477 aa).

A disordered region spans residues 11-39 (SKCSSSSTSEKRDISSPTSLVSDSASSDN). The span at 25 to 39 (SSPTSLVSDSASSDN) shows a compositional bias: polar residues. Cys173 (nucleophile) is an active-site residue. Active-site residues include Asp368 and His370. The tract at residues 453–477 (AETSSSTETSTEISGEEHEDDWQLL) is disordered. Positions 454–465 (ETSSSTETSTEI) are enriched in low complexity.

It belongs to the peptidase C54 family. In terms of assembly, interacts with ATG8a and ATG8d. Constitutively expressed.

It localises to the cytoplasm. It carries out the reaction [protein]-C-terminal L-amino acid-glycyl-phosphatidylethanolamide + H2O = [protein]-C-terminal L-amino acid-glycine + a 1,2-diacyl-sn-glycero-3-phosphoethanolamine. Cysteine protease that plays a key role in autophagy by mediating both proteolytic activation and delipidation of ATG8 family proteins. The protease activity is required for proteolytic activation of ATG8 family proteins: cleaves the C-terminal amino acid of ATG8 proteins to reveal a C-terminal glycine. Exposure of the glycine at the C-terminus is essential for ATG8 proteins conjugation to phosphatidylethanolamine (PE) and insertion to membranes, which is necessary for autophagy. In addition to the protease activity, also mediates delipidation of PE-conjugated ATG8 proteins. The sequence is that of Cysteine protease ATG4b from Arabidopsis thaliana (Mouse-ear cress).